Reading from the N-terminus, the 306-residue chain is Dermonecrotic toxin LarSicTox-alphaIB1ai (306 aa).

Residue valine 1 is a signal peptide. A propeptide spanning residues 2 to 27 is cleaved from the precursor; sequence RATEKFASMYFFCHSPQSAETDVAER. Residue histidine 38 is part of the active site. The Mg(2+) site is built by glutamate 58 and aspartate 60. Histidine 74 functions as the Nucleophile in the catalytic mechanism. Intrachain disulfides connect cysteine 78/cysteine 84 and cysteine 80/cysteine 223. Aspartate 118 is a binding site for Mg(2+). Asparagine 283 is a glycosylation site (N-linked (GlcNAc...) asparagine).

The protein belongs to the arthropod phospholipase D family. Class II subfamily. Requires Mg(2+) as cofactor. Expressed by the venom gland.

It localises to the secreted. The enzyme catalyses an N-(acyl)-sphingosylphosphocholine = an N-(acyl)-sphingosyl-1,3-cyclic phosphate + choline. It catalyses the reaction an N-(acyl)-sphingosylphosphoethanolamine = an N-(acyl)-sphingosyl-1,3-cyclic phosphate + ethanolamine. It carries out the reaction a 1-acyl-sn-glycero-3-phosphocholine = a 1-acyl-sn-glycero-2,3-cyclic phosphate + choline. The catalysed reaction is a 1-acyl-sn-glycero-3-phosphoethanolamine = a 1-acyl-sn-glycero-2,3-cyclic phosphate + ethanolamine. Its function is as follows. Dermonecrotic toxins cleave the phosphodiester linkage between the phosphate and headgroup of certain phospholipids (sphingolipid and lysolipid substrates), forming an alcohol (often choline) and a cyclic phosphate. This toxin acts on sphingomyelin (SM). It may also act on ceramide phosphoethanolamine (CPE), lysophosphatidylcholine (LPC) and lysophosphatidylethanolamine (LPE), but not on lysophosphatidylserine (LPS), and lysophosphatidylglycerol (LPG). It acts by transphosphatidylation, releasing exclusively cyclic phosphate products as second products. Induces dermonecrosis, hemolysis, increased vascular permeability, edema, inflammatory response, and platelet aggregation. This is Dermonecrotic toxin LarSicTox-alphaIB1ai from Loxosceles arizonica (Arizona brown spider).